We begin with the raw amino-acid sequence, 322 residues long: Methionyl-tRNA formyltransferase (322 aa).

Residue 113–116 (SLLP) coordinates (6S)-5,6,7,8-tetrahydrofolate.

Belongs to the Fmt family.

The catalysed reaction is L-methionyl-tRNA(fMet) + (6R)-10-formyltetrahydrofolate = N-formyl-L-methionyl-tRNA(fMet) + (6S)-5,6,7,8-tetrahydrofolate + H(+). Its function is as follows. Attaches a formyl group to the free amino group of methionyl-tRNA(fMet). The formyl group appears to play a dual role in the initiator identity of N-formylmethionyl-tRNA by promoting its recognition by IF2 and preventing the misappropriation of this tRNA by the elongation apparatus. The chain is Methionyl-tRNA formyltransferase from Blochmanniella pennsylvanica (strain BPEN).